Here is a 261-residue protein sequence, read N- to C-terminus: Probable enoyl-CoA hydratase EchA17 (261 aa).

It belongs to the enoyl-CoA hydratase/isomerase family.

The enzyme catalyses a (3S)-3-hydroxyacyl-CoA = a (2E)-enoyl-CoA + H2O. It carries out the reaction a 4-saturated-(3S)-3-hydroxyacyl-CoA = a (3E)-enoyl-CoA + H2O. Could possibly oxidize fatty acids using specific components. The protein is Probable enoyl-CoA hydratase EchA17 (echA17) of Mycobacterium bovis (strain BCG / Pasteur 1173P2).